A 303-amino-acid polypeptide reads, in one-letter code: tRNA pseudouridine synthase B (303 aa).

Aspartate 46 functions as the Nucleophile in the catalytic mechanism.

This sequence belongs to the pseudouridine synthase TruB family. Type 1 subfamily.

The enzyme catalyses uridine(55) in tRNA = pseudouridine(55) in tRNA. In terms of biological role, responsible for synthesis of pseudouridine from uracil-55 in the psi GC loop of transfer RNAs. In Hydrogenovibrio crunogenus (strain DSM 25203 / XCL-2) (Thiomicrospira crunogena), this protein is tRNA pseudouridine synthase B.